The chain runs to 118 residues: Ribonuclease P protein component (118 aa).

The protein belongs to the RnpA family. As to quaternary structure, consists of a catalytic RNA component (M1 or rnpB) and a protein subunit.

It catalyses the reaction Endonucleolytic cleavage of RNA, removing 5'-extranucleotides from tRNA precursor.. Functionally, RNaseP catalyzes the removal of the 5'-leader sequence from pre-tRNA to produce the mature 5'-terminus. It can also cleave other RNA substrates such as 4.5S RNA. The protein component plays an auxiliary but essential role in vivo by binding to the 5'-leader sequence and broadening the substrate specificity of the ribozyme. The chain is Ribonuclease P protein component from Vibrio cholerae serotype O1 (strain ATCC 39541 / Classical Ogawa 395 / O395).